A 427-amino-acid polypeptide reads, in one-letter code: Septin-8 (427 aa).

The 267-residue stretch at 39-305 folds into the Septin-type G domain; it reads QGFCFNILCV…ELYRRCKLEE (267 aa). Positions 49 to 56 are G1 motif; it reads GETGIGKS. GTP is bound by residues 49–56, G104, 185–193, G239, and R254; these read GETGIGKS and KADTISKSE. Residues 101–104 are G3 motif; that stretch reads DTVG. The tract at residues 184–187 is G4 motif; that stretch reads AKAD. Residues 321 to 409 are a coiled coil; the sequence is QETYEAKRKE…KAAMEALQSQ (89 aa). Residues 373–427 form a disordered region; the sequence is RVHQEESKKVEDKRRDLEEEMNSFNRRKAAMEALQSQSFQATSQQPLKKDKDRKN. Positions 374 to 389 are enriched in basic and acidic residues; that stretch reads VHQEESKKVEDKRRDL. The span at 406 to 418 shows a compositional bias: polar residues; it reads LQSQSFQATSQQP.

It belongs to the TRAFAC class TrmE-Era-EngA-EngB-Septin-like GTPase superfamily. Septin GTPase family.

The protein localises to the cytoplasm. It is found in the cytoskeleton. It localises to the synapse. Its subcellular location is the cell projection. The protein resides in the axon. The protein localises to the cytoplasmic vesicle. It is found in the secretory vesicle. It localises to the synaptic vesicle membrane. Its subcellular location is the presynapse. This chain is Septin-8, found in Xenopus tropicalis (Western clawed frog).